Reading from the N-terminus, the 193-residue chain is CASP-like protein 1F3 (193 aa).

A disordered region spans residues 1–25; sequence MASPQNTSQKRFFQANSPGGMPTAS. At 1 to 35 the chain is on the cytoplasmic side; that stretch reads MASPQNTSQKRFFQANSPGGMPTASQSQRSRILAQ. The chain crosses the membrane as a helical span at residues 36 to 56; that stretch reads ITLRFLAIAFTVTAIPVMITA. The Extracellular portion of the chain corresponds to 57–78; the sequence is KEPVSLLGLAITPSYKQSSAMK. A helical membrane pass occupies residues 79 to 99; sequence FLLGVNATVFAFTALSMLFVW. Topologically, residues 100-118 are cytoplasmic; sequence PLRRSGSKPINYFFLHLHD. A helical membrane pass occupies residues 119-139; sequence MVMTLLLISGCAAATAVGYLS. Residues 140 to 161 are Extracellular-facing; that stretch reads QYGQPETYWSPICDIVKKFCHQ. Residues 162–182 traverse the membrane as a helical segment; it reads MLISTVLSYLAFFCYLALNIL. Topologically, residues 183 to 193 are cytoplasmic; that stretch reads SVHKLMSRATE.

This sequence belongs to the Casparian strip membrane proteins (CASP) family. Homodimer and heterodimers.

The protein resides in the cell membrane. The polypeptide is CASP-like protein 1F3 (Populus trichocarpa (Western balsam poplar)).